The primary structure comprises 939 residues: MTIDYKKTLNLLDTSFPMRGDLARREPAMLKAWQERNLYRKIRAISQGRPKFILHDGPPYANGDIHIGHAVNKILKDIIIKSKTLSGFDAPYVPGWDCHGLPIEHQIEKKYGKHLPADQVRKLCRAFAQEQIDRQKADFMRLGVLGDWEHPYLTMNYAIEAGIIRALGKIFRNGHLYQGQKPVNWCIDCGSALAEAEVEYENKRSPAIDVGFEIIGRKDVCHPLAGVMAAEIPAGTRIFAVIWTTTPWTLPANQAVCVHPEFDYSLVSTSRGWLLLASELTNACLARYQLEGRVVATCKGLALEGLSLQHPFADRIVKVICGRHVTLEAGTGLVHTAPAHGLDDYFIGQQYGLPSDSPVKGDGKFSEQISLVGGMFVWKANDVVIDTLRSSGHLLHAEEIEHSYPHCWRHKTPIIFRATPQWFIGMQRQTAESQSFGESLRDLALRAVELTRFYPAWGRARLEAMIGNRPDWCISRQRNWGVPMTFFIHKEAHTLHPRTPELLEKVAGLVEQQGIEAWFSLDATELLGEEAQHYQKLTDTLDVWFDSGTTHETVLKQNIQLRHPADLYLEGSDQHRGWFQSSLLTGCAIDGCAPYTALLTHGFVVDGQGYKMSKSKGNVIAPQKIADTLGADILRLWVASTDYSGELSISDEILKRTVETYRRIRNTLRFLLANLADFNLAADALPPAEWVEIDRYMLAYTAALQNDLLGFYERYEFHQAVARLHHFCSEDLGGFYLDILKDRLYTSMANGIPRRSAQNALYHIVHSLVRLFAPVLSFTAEEVWQELGESAEDSVFLHTWHCFPDQSEILSDAQILIPRWQRLRELRARVLKQLEDARIQGEIGSSLAAIVEIHAAGEDFALLDSLGDDLRFVLITSEVHLQRVDDAAGEVIRVTASPHMKCERCWHYRQDVGSVPEHSSLCSRCVSNLAGSGEYRRFA.

The short motif at Pro-59–His-69 is the 'HIGH' region element. Glu-570 serves as a coordination point for L-isoleucyl-5'-AMP. Residues Lys-611–Ser-615 carry the 'KMSKS' region motif. Lys-614 is a binding site for ATP. Zn(2+) is bound by residues Cys-902, Cys-905, Cys-922, and Cys-925.

It belongs to the class-I aminoacyl-tRNA synthetase family. IleS type 1 subfamily. Monomer. It depends on Zn(2+) as a cofactor.

The protein resides in the cytoplasm. It catalyses the reaction tRNA(Ile) + L-isoleucine + ATP = L-isoleucyl-tRNA(Ile) + AMP + diphosphate. Its function is as follows. Catalyzes the attachment of isoleucine to tRNA(Ile). As IleRS can inadvertently accommodate and process structurally similar amino acids such as valine, to avoid such errors it has two additional distinct tRNA(Ile)-dependent editing activities. One activity is designated as 'pretransfer' editing and involves the hydrolysis of activated Val-AMP. The other activity is designated 'posttransfer' editing and involves deacylation of mischarged Val-tRNA(Ile). This is Isoleucine--tRNA ligase from Nitrosomonas europaea (strain ATCC 19718 / CIP 103999 / KCTC 2705 / NBRC 14298).